A 373-amino-acid polypeptide reads, in one-letter code: PqqA peptide cyclase (373 aa).

Residues 7–227 (ILNPVGLLAE…EVYAGVIVID (221 aa)) enclose the Radical SAM core domain. Residues Cys-21, Cys-25, and Cys-28 each contribute to the [4Fe-4S] cluster site.

This sequence belongs to the radical SAM superfamily. PqqE family. In terms of assembly, interacts with PqqD. The interaction is necessary for activity of PqqE. It depends on [4Fe-4S] cluster as a cofactor.

The catalysed reaction is [PQQ precursor protein] + S-adenosyl-L-methionine = E-Y cross-linked-[PQQ precursor protein] + 5'-deoxyadenosine + L-methionine + H(+). It functions in the pathway cofactor biosynthesis; pyrroloquinoline quinone biosynthesis. In terms of biological role, catalyzes the cross-linking of a glutamate residue and a tyrosine residue in the PqqA protein as part of the biosynthesis of pyrroloquinoline quinone (PQQ). The protein is PqqA peptide cyclase of Methylocella silvestris (strain DSM 15510 / CIP 108128 / LMG 27833 / NCIMB 13906 / BL2).